We begin with the raw amino-acid sequence, 181 residues long: Oligoribonuclease (181 aa).

In terms of domain architecture, Exonuclease spans 8 to 171 (LIWIDLEMTG…QDIQESIAEL (164 aa)). Tyrosine 129 is an active-site residue.

Belongs to the oligoribonuclease family.

It localises to the cytoplasm. In terms of biological role, 3'-to-5' exoribonuclease specific for small oligoribonucleotides. The polypeptide is Oligoribonuclease (Shewanella baltica (strain OS155 / ATCC BAA-1091)).